The following is a 342-amino-acid chain: MKVLSKLKPAPGLWLHKAPTPKPGRDEVLIKIKKTAICGTDLHIYKWDEWAQKTIPVPMHVGHEFVGEIVEVGEAASALAVGDRVSGEGHITCGDCRNCRAGKRHLCRYTVGVGVNRPGAFAEYLVIPAKNAYKIPAKISDDIAAILDPFGNAAHSALEFDLVGEDVLITGAGPVGLMSAAIARHVGARHVVITDVNDYRLALAEKVGVTAAVNSTKTPLTETMKNLGMTEGFDVGLEMSGNAEAFRSMLTVMNNGGKIAFLGIPPEPFAIDWNQVVFKSLLIKGIYGRRMFETWYKMTNLLLSGLDISPIITHEFPMKDFQQAFDVMLSGKTGKVILNWEQ.

Zn(2+) is bound at residue C38. Catalysis depends on charge relay system residues T40 and H43. Positions 63, 64, 93, 96, 99, and 107 each coordinate Zn(2+). Residues V175, D195, R200, 262-264 (LGI), and 286-287 (IY) contribute to the NAD(+) site.

It belongs to the zinc-containing alcohol dehydrogenase family. In terms of assembly, homotetramer. Zn(2+) is required as a cofactor.

The protein resides in the cytoplasm. It catalyses the reaction L-threonine + NAD(+) = (2S)-2-amino-3-oxobutanoate + NADH + H(+). It participates in amino-acid degradation; L-threonine degradation via oxydo-reductase pathway; glycine from L-threonine: step 1/2. Its function is as follows. Catalyzes the NAD(+)-dependent oxidation of L-threonine to 2-amino-3-ketobutyrate. This chain is L-threonine 3-dehydrogenase, found in Coxiella burnetii (strain Dugway 5J108-111).